Consider the following 424-residue polypeptide: G1/S-specific cyclin-E (424 aa).

A disordered region spans residues 1–25 (MSRRSGRLQSRQDNQPLTECISDEN). Over residues 7–17 (RLQSRQDNQPL) the composition is skewed to polar residues. At Thr-411 the chain carries Phosphothreonine.

It belongs to the cyclin family. Cyclin E subfamily. Interacts with a member of the CDK2/CDK protein kinases to form a serine/threonine kinase holoenzyme complex. The cyclin subunit imparts substrate specificity to the complex.

The protein resides in the nucleus. Its function is as follows. Essential for the control of the cell cycle at the G1/S (start) transition. The protein is G1/S-specific cyclin-E (CYCE) of Hemicentrotus pulcherrimus (Sea urchin).